The sequence spans 21 residues: Fibrinogen beta chain (21 aa).

Position 1 is a pyrrolidone carboxylic acid (Gln1). Acidic residues predominate over residues 1-11 (QHSTDYDEEEE). Positions 1 to 21 (QHSTDYDEEEEDRAKLHLDAR) are disordered. The O-linked (GalNAc...) threonine glycan is linked to Thr4. Residue Tyr6 is modified to Sulfotyrosine. Residues 12 to 21 (DRAKLHLDAR) are compositionally biased toward basic and acidic residues.

Heterohexamer; disulfide linked. Contains 2 sets of 3 non-identical chains (alpha, beta and gamma). The 2 heterotrimers are in head to head conformation with the N-termini in a small central domain. Conversion of fibrinogen to fibrin is triggered by thrombin, which cleaves fibrinopeptides A and B from alpha and beta chains, and thus exposes the N-terminal polymerization sites responsible for the formation of the soft clot.

The protein resides in the secreted. Its function is as follows. Cleaved by the protease thrombin to yield monomers which, together with fibrinogen alpha (FGA) and fibrinogen gamma (FGG), polymerize to form an insoluble fibrin matrix. Fibrin has a major function in hemostasis as one of the primary components of blood clots. In addition, functions during the early stages of wound repair to stabilize the lesion and guide cell migration during re-epithelialization. Was originally thought to be essential for platelet aggregation, based on in vitro studies using anticoagulated blood. However subsequent studies have shown that it is not absolutely required for thrombus formation in vivo. Enhances expression of SELP in activated platelets. Maternal fibrinogen is essential for successful pregnancy. Fibrin deposition is also associated with infection, where it protects against IFNG-mediated hemorrhage. May also facilitate the antibacterial immune response via both innate and T-cell mediated pathways. This Cervus elaphus (Red deer) protein is Fibrinogen beta chain (FGB).